Reading from the N-terminus, the 165-residue chain is Small histone ubiquitination factor 1 (165 aa).

Residues 1–17 show a composition bias toward basic and acidic residues; the sequence is MSSRRNDYHYDGNDHQY. Residues 1–86 form a disordered region; sequence MSSRRNDYHY…STRASFGAAS (86 aa). Composition is skewed to low complexity over residues 29–38 and 50–60; these read SFYESSYRSR and SSYDSPSSSTN. Residues 73-86 are compositionally biased toward polar residues; sequence PSNNSTRASFGAAS.

Component of the histone H2B ubiquitin ligase complex (HULC) composed of at least brl1, brl2, rhp6 and shf1.

The protein localises to the nucleus. The protein resides in the cytoplasm. Its subcellular location is the cytoskeleton. It localises to the microtubule organizing center. It is found in the spindle pole body. Functionally, component of the histone H2B ubiquitin ligase complex (HULC) which plays a role in transcription regulation by catalyzing the monoubiquitination of histone H2B to form H2BK123ub1. H2BK123ub1 gives a specific tag for epigenetic transcriptional activation and is also a prerequisite for H3K4me and H3K79me formation. The protein is Small histone ubiquitination factor 1 (shf1) of Schizosaccharomyces pombe (strain 972 / ATCC 24843) (Fission yeast).